A 195-amino-acid chain; its full sequence is HTH-type transcriptional regulator BetI (195 aa).

Residues 8–68 enclose the HTH tetR-type domain; the sequence is PIRRQQLIEA…ATMRYLISHL (61 aa). Residues 31–50 constitute a DNA-binding region (H-T-H motif); sequence SIVQIARRAGVSNGIISHYF.

The protein operates within amine and polyamine biosynthesis; betaine biosynthesis via choline pathway [regulation]. Repressor involved in the biosynthesis of the osmoprotectant glycine betaine. It represses transcription of the choline transporter BetT and the genes of BetAB involved in the synthesis of glycine betaine. The chain is HTH-type transcriptional regulator BetI from Pectobacterium carotovorum subsp. carotovorum (strain PC1).